A 324-amino-acid polypeptide reads, in one-letter code: HTH-type transcriptional regulator GlxA (324 aa).

Residues 223–321 (LAVLEKMETA…SQTPGSLRRR (99 aa)) form the HTH araC/xylS-type domain. DNA-binding regions (H-T-H motif) lie at residues 240 to 261 (TAMARLAGVSPRHLDRLFREHR) and 288 to 311 (IPEIAYATGFSSPAHFSNAFKRLF).

This Rhizobium meliloti (strain 1021) (Ensifer meliloti) protein is HTH-type transcriptional regulator GlxA (glxA).